A 574-amino-acid chain; its full sequence is MPRGLELLIAQTILQGFDAQYGRFLEVTSGAQQRFEQADWHAVQQAMKNRIHLYDHHVGLVVEQLRCITNGQSTDAAFLLRVKEHYTRLLPDYPRFEIAESFFNSVYCRLFDHRSLTPERLFIFSSQPERRFRTIPRPLAKDFHSDHGWESLLMRVISDLPLRLRWQNKSRDIHYIVRHLTETLGTDNLAESHLQVANELFYRNKAAWLVGKLITPSGTLPFLLPIHQTDDGELFIDTCLTTTAEASIVFGFARSYFMVYAPLPAALVEWLREILPGKTTAELYMAIGCQKHAKTESYREYLVYLQGCNEQFIEAPGIRGMVMLVFTLPGFDRVFKVIKDRFAPQKEMSAAHVCACYQLVKEHDRVGRMADTQEFENFVLEKRHISPALMELLLQEAAEKITDLGEQIVIRHLYIERRMVPLNIWLEQVEGQQLRDAIEEYGNAIRQLAAANIFPGDMLFKNFGVTRHGRVVFYDYDEICYMTEVNFRDIPPPRYPEDELASEPWYSVSPGDVFPEEFRHWLCADPRIGPLFEEMHADLFRADYWRALQNRIREGHVEDVYAYRRRQRFSVRFV.

ATP contacts are provided by residues 315 to 321 and K336; that span reads APGIRGM. Residue D371 is part of the active site.

The protein belongs to the AceK family.

The protein localises to the cytoplasm. The catalysed reaction is L-seryl-[isocitrate dehydrogenase] + ATP = O-phospho-L-seryl-[isocitrate dehydrogenase] + ADP + H(+). Functionally, bifunctional enzyme which can phosphorylate or dephosphorylate isocitrate dehydrogenase (IDH) on a specific serine residue. This is a regulatory mechanism which enables bacteria to bypass the Krebs cycle via the glyoxylate shunt in response to the source of carbon. When bacteria are grown on glucose, IDH is fully active and unphosphorylated, but when grown on acetate or ethanol, the activity of IDH declines drastically concomitant with its phosphorylation. The polypeptide is Isocitrate dehydrogenase kinase/phosphatase (Escherichia coli (strain SMS-3-5 / SECEC)).